A 293-amino-acid chain; its full sequence is ATP phosphoribosyltransferase (293 aa).

Belongs to the ATP phosphoribosyltransferase family. Long subfamily. The cofactor is Mg(2+).

It localises to the cytoplasm. The catalysed reaction is 1-(5-phospho-beta-D-ribosyl)-ATP + diphosphate = 5-phospho-alpha-D-ribose 1-diphosphate + ATP. Its pathway is amino-acid biosynthesis; L-histidine biosynthesis; L-histidine from 5-phospho-alpha-D-ribose 1-diphosphate: step 1/9. Its activity is regulated as follows. Feedback inhibited by histidine. Its function is as follows. Catalyzes the condensation of ATP and 5-phosphoribose 1-diphosphate to form N'-(5'-phosphoribosyl)-ATP (PR-ATP). Has a crucial role in the pathway because the rate of histidine biosynthesis seems to be controlled primarily by regulation of HisG enzymatic activity. This is ATP phosphoribosyltransferase from Nitratidesulfovibrio vulgaris (strain ATCC 29579 / DSM 644 / CCUG 34227 / NCIMB 8303 / VKM B-1760 / Hildenborough) (Desulfovibrio vulgaris).